The sequence spans 1072 residues: Carbamoyl phosphate synthase large chain (1072 aa).

Residues 1 to 401 (MPKRLDINTI…SLLKAVRSLE (401 aa)) are carboxyphosphate synthetic domain. 12 residues coordinate ATP: arginine 129, arginine 169, glycine 175, glycine 176, lysine 208, isoleucine 210, glutamate 215, glycine 241, valine 242, histidine 243, glutamine 284, and glutamate 298. The 195-residue stretch at 133-327 (RTLMQELNEP…IAKLAAKIAV (195 aa)) folds into the ATP-grasp 1 domain. 3 residues coordinate Mg(2+): glutamine 284, glutamate 298, and asparagine 300. The Mn(2+) site is built by glutamine 284, glutamate 298, and asparagine 300. Residues 402–546 (LGIYHLELDH…YSTYADENES (145 aa)) are oligomerization domain. Positions 547 to 929 (IVTDRKSVVV…ALYKGLVASG (383 aa)) are carbamoyl phosphate synthetic domain. The region spanning 671-861 (EAALTKLGIP…MANVATKVIL (191 aa)) is the ATP-grasp 2 domain. ATP-binding residues include arginine 707, arginine 746, glutamate 752, glycine 777, valine 778, histidine 779, serine 780, glutamine 820, and glutamate 832. Mg(2+)-binding residues include glutamine 820, glutamate 832, and asparagine 834. Mn(2+)-binding residues include glutamine 820, glutamate 832, and asparagine 834. The 143-residue stretch at 930-1072 (INIPTHGSVI…QTKRHEVVHA (143 aa)) folds into the MGS-like domain. Positions 930-1072 (INIPTHGSVI…QTKRHEVVHA (143 aa)) are allosteric domain.

This sequence belongs to the CarB family. As to quaternary structure, composed of two chains; the small (or glutamine) chain promotes the hydrolysis of glutamine to ammonia, which is used by the large (or ammonia) chain to synthesize carbamoyl phosphate. Tetramer of heterodimers (alpha,beta)4. It depends on Mg(2+) as a cofactor. The cofactor is Mn(2+).

It catalyses the reaction hydrogencarbonate + L-glutamine + 2 ATP + H2O = carbamoyl phosphate + L-glutamate + 2 ADP + phosphate + 2 H(+). The enzyme catalyses hydrogencarbonate + NH4(+) + 2 ATP = carbamoyl phosphate + 2 ADP + phosphate + 2 H(+). Its pathway is amino-acid biosynthesis; L-arginine biosynthesis; carbamoyl phosphate from bicarbonate: step 1/1. It participates in pyrimidine metabolism; UMP biosynthesis via de novo pathway; (S)-dihydroorotate from bicarbonate: step 1/3. In terms of biological role, large subunit of the glutamine-dependent carbamoyl phosphate synthetase (CPSase). CPSase catalyzes the formation of carbamoyl phosphate from the ammonia moiety of glutamine, carbonate, and phosphate donated by ATP, constituting the first step of 2 biosynthetic pathways, one leading to arginine and/or urea and the other to pyrimidine nucleotides. The large subunit (synthetase) binds the substrates ammonia (free or transferred from glutamine from the small subunit), hydrogencarbonate and ATP and carries out an ATP-coupled ligase reaction, activating hydrogencarbonate by forming carboxy phosphate which reacts with ammonia to form carbamoyl phosphate. In Bacillus thuringiensis (strain Al Hakam), this protein is Carbamoyl phosphate synthase large chain.